A 200-amino-acid polypeptide reads, in one-letter code: dTTP/UTP pyrophosphatase (200 aa).

D73 serves as the catalytic Proton acceptor.

It belongs to the Maf family. YhdE subfamily. It depends on a divalent metal cation as a cofactor.

Its subcellular location is the cytoplasm. It carries out the reaction dTTP + H2O = dTMP + diphosphate + H(+). The catalysed reaction is UTP + H2O = UMP + diphosphate + H(+). Nucleoside triphosphate pyrophosphatase that hydrolyzes dTTP and UTP. May have a dual role in cell division arrest and in preventing the incorporation of modified nucleotides into cellular nucleic acids. In Chromohalobacter salexigens (strain ATCC BAA-138 / DSM 3043 / CIP 106854 / NCIMB 13768 / 1H11), this protein is dTTP/UTP pyrophosphatase.